The chain runs to 189 residues: MTQYRGGYVTSCYAQALFNASVSKLNDICKGIKFIFNLSENGNNQFLSFLANPTANLKDKISVIELITNHIDTTLSRFILVVVTNNRGNMLLQIFNTFLEYVRKHNKEVSISVTSCSKLTTQEKQGICNALLEKYGKVVSITNTVDPSILGGFIIRVGFDIIDVSLNSYLQSLQELSKIAVRSMVNSKV.

It belongs to the ATPase delta chain family. As to quaternary structure, F-type ATPases have 2 components, F(1) - the catalytic core - and F(0) - the membrane proton channel. F(1) has five subunits: alpha(3), beta(3), gamma(1), delta(1), epsilon(1). F(0) has three main subunits: a(1), b(2) and c(10-14). The alpha and beta chains form an alternating ring which encloses part of the gamma chain. F(1) is attached to F(0) by a central stalk formed by the gamma and epsilon chains, while a peripheral stalk is formed by the delta and b chains.

It localises to the cell inner membrane. In terms of biological role, f(1)F(0) ATP synthase produces ATP from ADP in the presence of a proton or sodium gradient. F-type ATPases consist of two structural domains, F(1) containing the extramembraneous catalytic core and F(0) containing the membrane proton channel, linked together by a central stalk and a peripheral stalk. During catalysis, ATP synthesis in the catalytic domain of F(1) is coupled via a rotary mechanism of the central stalk subunits to proton translocation. This protein is part of the stalk that links CF(0) to CF(1). It either transmits conformational changes from CF(0) to CF(1) or is implicated in proton conduction. The protein is ATP synthase subunit delta of Ehrlichia ruminantium (strain Gardel).